The sequence spans 628 residues: MDSGSSSSDSAPDCWDQVDMEAPGSAPSGDGVSSAVAEAQREPLSSAFSRQLNVNAKPFVPNVHAAEFVPSFLRGPSQPPTLPAGSGSNDETCTGAGYPQGKRMGRGAPVEPSREEPLVSLEGSNSAVTMELSEPVVENGEVEMALEESWEHSKEVSEAEPGGGSSGDSGPPEESGQEMMEEKEEIRKSKSVIVPSGAPKKEHVNVVFIGHVDAGKSTIGGQIMFLTGMVDKRTLEKYEREAKEKNRETWYLSWALDTNQEERDKGKTVEVGRAYFETERKHFTILDAPGHKSFVPNMIGGASQADLAVLVISARKGEFETGFEKGGQTREHAMLAKTAGVKHLIVLINKMDDPTVNWSIERYEECKEKLVPFLKKVGFSPKKDIHFMPCSGLTGANVKEQSDFCPWYTGLPFIPYLDNLPNFNRSIDGPIRLPIVDKYKDMGTVVLGKLESGSIFKGQQLVMMPNKHNVEVLGILSDDTETDFVAPGENLKIRLKGIEEEEILPGFILCDPSNLCHSGRTFDVQIVIIEHKSIICPGYNAVLHIHTCIEEVEITALISLVDKKSGEKSKTRPRFVKQDQVCIARLRTAGTICLETFKDFPQMGRFTLRDEGKTIAIGKVLKLVPEKD.

A compositionally biased stretch (low complexity) spans 1-10 (MDSGSSSSDS). 3 disordered regions span residues 1–44 (MDSG…REPL), 71–124 (SFLR…LEGS), and 146–191 (LEES…KSKS). The 225-residue stretch at 201–425 (KEHVNVVFIG…YLDNLPNFNR (225 aa)) folds into the tr-type G domain. The interval 210–217 (GHVDAGKS) is G1. 213–218 (DAGKST) contacts GTP. The segment at 266–270 (GKTVE) is G2. The interval 287–290 (DAPG) is G3. Residues 349 to 352 (NKMD) and 391 to 393 (SGL) each bind GTP. Residues 349–352 (NKMD) form a G4 region. Residues 391 to 393 (SGL) form a G5 region.

This sequence belongs to the TRAFAC class translation factor GTPase superfamily. Classic translation factor GTPase family. ERF3 subfamily. Component of the eRF1-eRF3-GTP ternary complex, composed of ETF1/ERF1 and ERF3 (GSPT1/ERF3A or GSPT2/ERF3B) and GTP. Component of the transient SURF (SMG1-UPF1-eRF1-eRF3) complex. Interacts with UPF1 and PABPC1.

It is found in the cytoplasm. It catalyses the reaction GTP + H2O = GDP + phosphate + H(+). GTPase component of the eRF1-eRF3-GTP ternary complex, a ternary complex that mediates translation termination in response to the termination codons UAA, UAG and UGA. GSPT2/ERF3B mediates ETF1/ERF1 delivery to stop codons: The eRF1-eRF3-GTP complex binds to a stop codon in the ribosomal A-site. GTP hydrolysis by GSPT2/ERF3B induces a conformational change that leads to its dissociation, permitting ETF1/ERF1 to accommodate fully in the A-site. Component of the transient SURF complex which recruits UPF1 to stalled ribosomes in the context of nonsense-mediated decay (NMD) of mRNAs containing premature stop codons. The chain is Eukaryotic peptide chain release factor GTP-binding subunit ERF3B (GSPT2) from Pongo abelii (Sumatran orangutan).